The chain runs to 426 residues: Serine/threonine-protein kinase ssn3 (426 aa).

The Protein kinase domain occupies 39–368 (YHIVGFISSG…AKEALEHPYF (330 aa)). Residues 45–53 (ISSGTYGRV) and K69 contribute to the ATP site. The active-site Proton acceptor is the D171. Over residues 389–398 (RRITHDDNDI) the composition is skewed to basic and acidic residues. Residues 389–426 (RRITHDDNDIRSGSLPGTKRSGLPDDSLMSRAAKRMKE) are disordered.

Belongs to the protein kinase superfamily. CMGC Ser/Thr protein kinase family. CDC2/CDKX subfamily. Component of the srb8-11 complex, a regulatory module of the Mediator complex. Mg(2+) is required as a cofactor.

It is found in the nucleus. It carries out the reaction L-seryl-[protein] + ATP = O-phospho-L-seryl-[protein] + ADP + H(+). The enzyme catalyses L-threonyl-[protein] + ATP = O-phospho-L-threonyl-[protein] + ADP + H(+). The catalysed reaction is [DNA-directed RNA polymerase] + ATP = phospho-[DNA-directed RNA polymerase] + ADP + H(+). In terms of biological role, component of the srb8-11 complex. The srb8-11 complex is a regulatory module of the Mediator complex which is itself involved in regulation of basal and activated RNA polymerase II-dependent transcription. The srb8-11 complex may be involved in the transcriptional repression of a subset of genes regulated by Mediator. It may inhibit the association of the Mediator complex with RNA polymerase II to form the holoenzyme complex. The srb8-11 complex phosphorylates the C-terminal domain (CTD) of the largest subunit of RNA polymerase II. In Emericella nidulans (strain FGSC A4 / ATCC 38163 / CBS 112.46 / NRRL 194 / M139) (Aspergillus nidulans), this protein is Serine/threonine-protein kinase ssn3 (ssn3).